A 223-amino-acid chain; its full sequence is Ribonuclease T (223 aa).

The region spanning 20–194 is the Exonuclease domain; the sequence is VVIDVETAGF…YDTEQTALLF (175 aa). Residues D23, E25, H181, and D186 each coordinate Mg(2+). H181 acts as the Proton donor/acceptor in catalysis.

The protein belongs to the RNase T family. As to quaternary structure, homodimer. The cofactor is Mg(2+).

Functionally, trims short 3' overhangs of a variety of RNA species, leaving a one or two nucleotide 3' overhang. Responsible for the end-turnover of tRNA: specifically removes the terminal AMP residue from uncharged tRNA (tRNA-C-C-A). Also appears to be involved in tRNA biosynthesis. This Cronobacter sakazakii (strain ATCC BAA-894) (Enterobacter sakazakii) protein is Ribonuclease T.